Consider the following 121-residue polypeptide: MNHAPHLYFAWQQLVEKSQLMLRLATEEQWDELIASEMAYVNAVQEIAHLTEEIDPSTTMQEQLRPMLRLILDNESKVKQLLQIRMDELAKLVGQSSVQKSVLSAYGDQGGFVLAPQDNLF.

Residues 1–50 are required for homodimerization; the sequence is MNHAPHLYFAWQQLVEKSQLMLRLATEEQWDELIASEMAYVNAVQEIAHL. The tract at residues 60–98 is fliD binding; it reads MQEQLRPMLRLILDNESKVKQLLQIRMDELAKLVGQSSV.

Belongs to the FliT family. Homodimer. Interacts with FliD and FlhC.

The protein resides in the cytoplasm. Its subcellular location is the cytosol. Its function is as follows. Dual-function protein that regulates the transcription of class 2 flagellar operons and that also acts as an export chaperone for the filament-capping protein FliD. As a transcriptional regulator, acts as an anti-FlhDC factor; it directly binds FlhC, thus inhibiting the binding of the FlhC/FlhD complex to class 2 promoters, resulting in decreased expression of class 2 flagellar operons. As a chaperone, effects FliD transition to the membrane by preventing its premature polymerization, and by directing it to the export apparatus. In Escherichia coli O139:H28 (strain E24377A / ETEC), this protein is Flagellar protein FliT.